We begin with the raw amino-acid sequence, 610 residues long: Elongation factor 4 (610 aa).

One can recognise a tr-type G domain in the interval 7–189; that stretch reads SRIRNFSIIA…AIVQRIPPPK (183 aa). Residues 19 to 24 and 136 to 139 contribute to the GTP site; these read DHGKST and NKID.

It belongs to the TRAFAC class translation factor GTPase superfamily. Classic translation factor GTPase family. LepA subfamily.

The protein localises to the cell inner membrane. The enzyme catalyses GTP + H2O = GDP + phosphate + H(+). Required for accurate and efficient protein synthesis under certain stress conditions. May act as a fidelity factor of the translation reaction, by catalyzing a one-codon backward translocation of tRNAs on improperly translocated ribosomes. Back-translocation proceeds from a post-translocation (POST) complex to a pre-translocation (PRE) complex, thus giving elongation factor G a second chance to translocate the tRNAs correctly. Binds to ribosomes in a GTP-dependent manner. The polypeptide is Elongation factor 4 (Thermus thermophilus (strain ATCC 27634 / DSM 579 / HB8)).